A 134-amino-acid polypeptide reads, in one-letter code: Probable thionin-2.4 (134 aa).

An N-terminal signal peptide occupies residues 1–24; that stretch reads MEGKTLIVSVLIMSLFMAQNQVDA. 3 disulfide bridges follow: Cys27/Cys64, Cys28/Cys56, and Cys40/Cys50. Positions 71 to 134 are cleaved as a propeptide — acidic domain; the sequence is DILENTGDAV…KGSMNAVENA (64 aa).

The protein belongs to the plant thionin (TC 1.C.44) family.

The protein resides in the secreted. Functionally, thionins are small plant proteins which are toxic to animal cells. They seem to exert their toxic effect at the level of the cell membrane. Their precise function is not known. The polypeptide is Probable thionin-2.4 (Arabidopsis thaliana (Mouse-ear cress)).